The sequence spans 81 residues: Sulfur carrier protein TusA (81 aa).

The active-site Cysteine persulfide intermediate is the Cys-19.

This sequence belongs to the sulfur carrier protein TusA family. Interacts with IscS.

It is found in the cytoplasm. Its pathway is tRNA modification. In terms of biological role, sulfur carrier protein involved in sulfur trafficking in the cell. Part of a sulfur-relay system required for 2-thiolation during synthesis of 2-thiouridine of the modified wobble base 5-methylaminomethyl-2-thiouridine (mnm(5)s(2)U) in tRNA. Interacts with IscS and stimulates its cysteine desulfurase activity. Accepts an activated sulfur from IscS, which is then transferred to TusD, and thus determines the direction of sulfur flow from IscS to 2-thiouridine formation. Also appears to be involved in sulfur transfer for the biosynthesis of molybdopterin. This is Sulfur carrier protein TusA from Cronobacter sakazakii (strain ATCC BAA-894) (Enterobacter sakazakii).